The following is a 262-amino-acid chain: Nurim (262 aa).

Residues M1–A4 are Nuclear-facing. The chain crosses the membrane as a helical span at residues L5–F28. Residues T29 to S58 lie on the Perinuclear space side of the membrane. A helical membrane pass occupies residues I59 to M80. Topologically, residues A81–Q97 are nuclear. Residues R98–R114 traverse the membrane as a helical segment. The Perinuclear space portion of the chain corresponds to Y115–W133. Residues A134–L164 traverse the membrane as a helical segment. The Nuclear portion of the chain corresponds to M165–L191. The chain crosses the membrane as a helical span at residues F192–V210. The Perinuclear space segment spans residues P211–D216. Residues R217–L234 traverse the membrane as a helical segment. Residues D235–E262 are Nuclear-facing.

This sequence belongs to the nurim family.

The protein resides in the nucleus inner membrane. This Rattus norvegicus (Rat) protein is Nurim (Nrm).